Consider the following 87-residue polypeptide: Small ribosomal subunit protein bS20 (87 aa).

Basic residues predominate over residues 1–15 (MANHKSAAKRARQSI). Positions 1 to 29 (MANHKSAAKRARQSIRKTAVNNARKSTVK) are disordered. A compositionally biased stretch (polar residues) spans 19-29 (AVNNARKSTVK).

The protein belongs to the bacterial ribosomal protein bS20 family.

Binds directly to 16S ribosomal RNA. This is Small ribosomal subunit protein bS20 from Bdellovibrio bacteriovorus (strain ATCC 15356 / DSM 50701 / NCIMB 9529 / HD100).